Consider the following 341-residue polypeptide: Holliday junction branch migration complex subunit RuvB (341 aa).

Residues 1–182 (MKDRLISAVA…FGVISRLEYY (182 aa)) are large ATPase domain (RuvB-L). ATP-binding positions include L21, R22, G63, K66, T67, T68, 129–131 (EDY), R172, Y182, and R219. T67 serves as a coordination point for Mg(2+). Positions 183 to 253 (RPEDLVLIVN…VAVEALKFLE (71 aa)) are small ATPAse domain (RuvB-S). The interval 256-341 (PLGLDFADRR…REETDQVSLW (86 aa)) is head domain (RuvB-H). Residues R311 and R316 each contribute to the DNA site.

The protein belongs to the RuvB family. Homohexamer. Forms an RuvA(8)-RuvB(12)-Holliday junction (HJ) complex. HJ DNA is sandwiched between 2 RuvA tetramers; dsDNA enters through RuvA and exits via RuvB. An RuvB hexamer assembles on each DNA strand where it exits the tetramer. Each RuvB hexamer is contacted by two RuvA subunits (via domain III) on 2 adjacent RuvB subunits; this complex drives branch migration. In the full resolvosome a probable DNA-RuvA(4)-RuvB(12)-RuvC(2) complex forms which resolves the HJ.

The protein localises to the cytoplasm. It carries out the reaction ATP + H2O = ADP + phosphate + H(+). Functionally, the RuvA-RuvB-RuvC complex processes Holliday junction (HJ) DNA during genetic recombination and DNA repair, while the RuvA-RuvB complex plays an important role in the rescue of blocked DNA replication forks via replication fork reversal (RFR). RuvA specifically binds to HJ cruciform DNA, conferring on it an open structure. The RuvB hexamer acts as an ATP-dependent pump, pulling dsDNA into and through the RuvAB complex. RuvB forms 2 homohexamers on either side of HJ DNA bound by 1 or 2 RuvA tetramers; 4 subunits per hexamer contact DNA at a time. Coordinated motions by a converter formed by DNA-disengaged RuvB subunits stimulates ATP hydrolysis and nucleotide exchange. Immobilization of the converter enables RuvB to convert the ATP-contained energy into a lever motion, pulling 2 nucleotides of DNA out of the RuvA tetramer per ATP hydrolyzed, thus driving DNA branch migration. The RuvB motors rotate together with the DNA substrate, which together with the progressing nucleotide cycle form the mechanistic basis for DNA recombination by continuous HJ branch migration. Branch migration allows RuvC to scan DNA until it finds its consensus sequence, where it cleaves and resolves cruciform DNA. The polypeptide is Holliday junction branch migration complex subunit RuvB (Pelotomaculum thermopropionicum (strain DSM 13744 / JCM 10971 / SI)).